We begin with the raw amino-acid sequence, 291 residues long: Nucleotide-binding protein lin2617 (291 aa).

13 to 20 (GMSGAGKT) provides a ligand contact to ATP. Residue 63 to 66 (DLRG) participates in GTP binding.

This sequence belongs to the RapZ-like family.

Functionally, displays ATPase and GTPase activities. The polypeptide is Nucleotide-binding protein lin2617 (Listeria innocua serovar 6a (strain ATCC BAA-680 / CLIP 11262)).